A 737-amino-acid chain; its full sequence is Dual specificity protein kinase KNS1 (737 aa).

2 disordered regions span residues 1-33 and 270-290; these read MSQNIQIGTRKRSRANMNNSTTTGPANNTSSNK and SSLRKFTSNGSSESASSNKSN. The span at 15–33 shows a compositional bias: polar residues; sequence ANMNNSTTTGPANNTSSNK. The segment covering 277–290 has biased composition (low complexity); that stretch reads SNGSSESASSNKSN. Residues 313-720 enclose the Protein kinase domain; sequence FVVKDLLGQG…AKDALDHEWF (408 aa). ATP-binding positions include 319–327 and K343; that span reads LGQGTFGKV. D440 serves as the catalytic Proton acceptor. The residue at position 562 (T562) is a Phosphothreonine.

The protein belongs to the protein kinase superfamily. CMGC Ser/Thr protein kinase family. Lammer subfamily. Phosphorylated (auto-) on Ser/Thr/Tyr.

It carries out the reaction L-seryl-[protein] + ATP = O-phospho-L-seryl-[protein] + ADP + H(+). The catalysed reaction is L-threonyl-[protein] + ATP = O-phospho-L-threonyl-[protein] + ADP + H(+). The enzyme catalyses L-tyrosyl-[protein] + ATP = O-phospho-L-tyrosyl-[protein] + ADP + H(+). Its function is as follows. Nonessential protein kinase. The polypeptide is Dual specificity protein kinase KNS1 (KNS1) (Saccharomyces cerevisiae (strain ATCC 204508 / S288c) (Baker's yeast)).